Consider the following 915-residue polypeptide: Alanine--tRNA ligase (915 aa).

Residues His605, His609, Cys709, and His713 each contribute to the Zn(2+) site. Residues 882-901 are disordered; the sequence is GGGGDERLAQGGGRNPDGLT.

The protein belongs to the class-II aminoacyl-tRNA synthetase family. The cofactor is Zn(2+).

It is found in the cytoplasm. The enzyme catalyses tRNA(Ala) + L-alanine + ATP = L-alanyl-tRNA(Ala) + AMP + diphosphate. Catalyzes the attachment of alanine to tRNA(Ala) in a two-step reaction: alanine is first activated by ATP to form Ala-AMP and then transferred to the acceptor end of tRNA(Ala). Also edits incorrectly charged Ser-tRNA(Ala) and Gly-tRNA(Ala) via its editing domain. The chain is Alanine--tRNA ligase from Methanopyrus kandleri (strain AV19 / DSM 6324 / JCM 9639 / NBRC 100938).